The chain runs to 159 residues: Transcription elongation factor A protein-like 1 (159 aa).

The segment at 1-97 is disordered; sequence MDKPRKENEE…PPCGVGKHKL (97 aa). A compositionally biased stretch (basic and acidic residues) spans 17-34; it reads KTDEERPPVEHSPEKQSP. 6 positions are modified to phosphoserine: serine 28, serine 33, serine 38, serine 39, serine 43, and serine 44. Acidic residues predominate over residues 37–54; that stretch reads QSSEEQSSEEEFFPEELL. Basic and acidic residues predominate over residues 64-80; that stretch reads SEERPPQEGLSRKDLFE.

This sequence belongs to the TFS-II family. TFA subfamily. Post-translationally, phosphorylation of Ser-38 and Ser-39 is critical for transcriptional repression. In terms of tissue distribution, expressed in all tissues examined. Highly expressed in heart, ovary, prostate and skeletal muscle. Moderately expressed in brain, placenta, testis and small intestine. Weakly expressed in lung, liver and spleen. Expressed in several cancer cell lines.

It localises to the nucleus. May be involved in transcriptional regulation. Modulates various viral and cellular promoters in a promoter context-dependent manner. For example, transcription from the FOS promoter is increased, while Rous sarcoma virus (RSV) long terminal repeat (LTR) promoter activity is repressed. Does not bind DNA directly. This is Transcription elongation factor A protein-like 1 from Homo sapiens (Human).